We begin with the raw amino-acid sequence, 330 residues long: Methionyl-tRNA formyltransferase (330 aa).

Residue 121-124 participates in (6S)-5,6,7,8-tetrahydrofolate binding; it reads SLLP.

This sequence belongs to the Fmt family.

It carries out the reaction L-methionyl-tRNA(fMet) + (6R)-10-formyltetrahydrofolate = N-formyl-L-methionyl-tRNA(fMet) + (6S)-5,6,7,8-tetrahydrofolate + H(+). Functionally, attaches a formyl group to the free amino group of methionyl-tRNA(fMet). The formyl group appears to play a dual role in the initiator identity of N-formylmethionyl-tRNA by promoting its recognition by IF2 and preventing the misappropriation of this tRNA by the elongation apparatus. The polypeptide is Methionyl-tRNA formyltransferase (Burkholderia cenocepacia (strain ATCC BAA-245 / DSM 16553 / LMG 16656 / NCTC 13227 / J2315 / CF5610) (Burkholderia cepacia (strain J2315))).